The primary structure comprises 618 residues: Carotenoid cleavage dioxygenase 7, chloroplastic (618 aa).

A chloroplast-targeting transit peptide spans 1–31 (MSLPIPPKFLPPLKSPPIHHHQTPPPLAPPR). The segment at 11 to 34 (PPLKSPPIHHHQTPPPLAPPRAAI) is disordered. Fe cation-binding residues include histidine 266, histidine 319, histidine 398, and histidine 612.

The protein belongs to the carotenoid oxygenase family. It depends on Fe(2+) as a cofactor. As to expression, expressed in flowers, siliques, inflorescence stems, petiole, leaves and roots.

It localises to the plastid. The protein localises to the chloroplast. The catalysed reaction is 9-cis-beta-carotene + O2 = 9-cis-10'-apo-beta-carotenal + beta-ionone. In terms of biological role, involved in strigolactones biosynthesis by cleaving asymmetrically a variety of linear and cyclic carotenoids at the 9-10 double bond. Produces one C(13) beta-ionone and the C(27) 10'-apo-beta-carotenal. Strigolactones are hormones that inhibit tillering and shoot branching through the MAX-dependent pathway, contribute to the regulation of shoot architectural response to phosphate-limiting conditions and function as rhizosphere signal that stimulates hyphal branching of arbuscular mycorrhizal fungi and trigger seed germination of root parasitic weeds. No activity on lycopene, lutein, zeaxanthin, violaxanthin or neoxanthin. Probably not involved in abscisic acid biosynthesis. This is Carotenoid cleavage dioxygenase 7, chloroplastic (CCD7) from Arabidopsis thaliana (Mouse-ear cress).